Here is a 321-residue protein sequence, read N- to C-terminus: Glycerol-3-phosphate phosphatase (321 aa).

D34 serves as the catalytic Nucleophile. Positions 34, 36, and 260 each coordinate Mg(2+). D36 (proton donor) is an active-site residue.

This sequence belongs to the HAD-like hydrolase superfamily. CbbY/CbbZ/Gph/YieH family. Homodimer. The cofactor is Mg(2+). As to expression, ubiquitously expressed with higher expression in testis, heart, skeletal muscle and islet tissue (at protein level).

It catalyses the reaction O-phospho-L-tyrosyl-[protein] + H2O = L-tyrosyl-[protein] + phosphate. It carries out the reaction sn-glycerol 1-phosphate + H2O = glycerol + phosphate. The enzyme catalyses sn-glycerol 3-phosphate + H2O = glycerol + phosphate. Inhibited by orthovanadate, beryllium trifluoride, Ca(2+) and EDTA. Functionally, glycerol-3-phosphate phosphatase hydrolyzing glycerol-3-phosphate into glycerol. Thereby, regulates the cellular levels of glycerol-3-phosphate a metabolic intermediate of glucose, lipid and energy metabolism. Was also shown to have a 2-phosphoglycolate phosphatase activity and a tyrosine-protein phosphatase activity. However, their physiological relevance is unclear. In vitro, also has a phosphatase activity toward ADP, ATP, GDP and GTP. In Mus musculus (Mouse), this protein is Glycerol-3-phosphate phosphatase.